The chain runs to 440 residues: Ferredoxin--NADP reductase (440 aa).

One can recognise a CpcD-like domain in the interval 17-75 (SRVFVYEVVGMRQNEETDQTNYPIRKSGSVFIRVPYNRMNQEMQRITRLGGKIVSIQTV). A disordered region spans residues 93–142 (ASSETAKSEGNGKATPVKTDSGAKGFAKPPAEEQLKKKDNKGNTMTQAKA). A compositionally biased stretch (basic and acidic residues) spans 122 to 133 (PAEEQLKKKDNK). An FAD-binding FR-type domain is found at 155 to 279 (NAPFIGKVIS…TGPVGKEMLL (125 aa)). FAD-binding positions include 214–217 (RLYS), 235–237 (CVR), Tyr-241, 253–255 (VCS), and Thr-294. The NADP(+) site is built by Ser-217 and Arg-237. NADP(+) contacts are provided by residues Thr-294, 330 to 331 (VP), 360 to 361 (SR), 370 to 374 (RMYIQ), 399 to 400 (GL), and Glu-438.

It belongs to the ferredoxin--NADP reductase type 1 family. FAD is required as a cofactor.

It localises to the cellular thylakoid membrane. It carries out the reaction 2 reduced [2Fe-2S]-[ferredoxin] + NADP(+) + H(+) = 2 oxidized [2Fe-2S]-[ferredoxin] + NADPH. In Trichormus variabilis (strain ATCC 29413 / PCC 7937) (Anabaena variabilis), this protein is Ferredoxin--NADP reductase (petH).